A 211-amino-acid chain; its full sequence is Glycerol-3-phosphate acyltransferase (211 aa).

A run of 5 helical transmembrane segments spans residues 8–28, 84–104, 116–136, 145–165, and 170–190; these read YCLA…LILT, LALP…WLGF, VLLA…FAVA, AALC…GMGL, and LAQS…LVFL.

Belongs to the PlsY family. Probably interacts with PlsX.

The protein localises to the cell inner membrane. The enzyme catalyses an acyl phosphate + sn-glycerol 3-phosphate = a 1-acyl-sn-glycero-3-phosphate + phosphate. Its pathway is lipid metabolism; phospholipid metabolism. In terms of biological role, catalyzes the transfer of an acyl group from acyl-phosphate (acyl-PO(4)) to glycerol-3-phosphate (G3P) to form lysophosphatidic acid (LPA). This enzyme utilizes acyl-phosphate as fatty acyl donor, but not acyl-CoA or acyl-ACP. The chain is Glycerol-3-phosphate acyltransferase from Granulibacter bethesdensis (strain ATCC BAA-1260 / CGDNIH1).